A 115-amino-acid polypeptide reads, in one-letter code: Large ribosomal subunit protein bL19 (115 aa).

It belongs to the bacterial ribosomal protein bL19 family.

In terms of biological role, this protein is located at the 30S-50S ribosomal subunit interface and may play a role in the structure and function of the aminoacyl-tRNA binding site. This Kosmotoga olearia (strain ATCC BAA-1733 / DSM 21960 / TBF 19.5.1) protein is Large ribosomal subunit protein bL19.